We begin with the raw amino-acid sequence, 182 residues long: CDP-diacylglycerol--glycerol-3-phosphate 3-phosphatidyltransferase (182 aa).

Topologically, residues 2 to 12 are cytoplasmic; that stretch reads QFNIPTLLTLF. Residues 13–37 form a helical membrane-spanning segment; sequence RVILIPFFVLVFYLPVTWSPFAAAL. The Periplasmic segment spans residues 38–60; it reads IFCVAAVTDWFDGFLARRWNQST. The helical transmembrane segment at 61–81 threads the bilayer; that stretch reads RFGAFLDPVADKVLVAIAMVL. Residues 82–86 are Cytoplasmic-facing; it reads VTEHY. Residues 87–107 traverse the membrane as a helical segment; sequence HSWWVTLPAATMIAREIIISA. Over 108 to 145 the chain is Periplasmic; sequence LREWMAELGKRSSVAVSWIGKVKTTAQMVALAWLLWRP. Residues 146 to 168 traverse the membrane as a helical segment; the sequence is NIWVEYAGIALFFVAAVLTLWSM. Residues 169 to 181 lie on the Cytoplasmic side of the membrane; the sequence is LQYLSAARADLLD.

Belongs to the CDP-alcohol phosphatidyltransferase class-I family.

The protein localises to the cell inner membrane. It carries out the reaction a CDP-1,2-diacyl-sn-glycerol + sn-glycerol 3-phosphate = a 1,2-diacyl-sn-glycero-3-phospho-(1'-sn-glycero-3'-phosphate) + CMP + H(+). It functions in the pathway phospholipid metabolism; phosphatidylglycerol biosynthesis; phosphatidylglycerol from CDP-diacylglycerol: step 1/2. Its function is as follows. Catalyzes the conversion of cytidine diphosphate diacylglycerol (CDP-DG) and glycerol 3-phosphate into phosphatidylglycerol. Essential for the synthesis of anionic phospholipids, thereby playing a role in balancing the ratio of zwitterionic and anionic phospholipids, which is thought to be important for normal membrane function. The sequence is that of CDP-diacylglycerol--glycerol-3-phosphate 3-phosphatidyltransferase from Shigella sonnei (strain Ss046).